The sequence spans 117 residues: Large ribosomal subunit protein bL20 (117 aa).

This sequence belongs to the bacterial ribosomal protein bL20 family.

Binds directly to 23S ribosomal RNA and is necessary for the in vitro assembly process of the 50S ribosomal subunit. It is not involved in the protein synthesizing functions of that subunit. This is Large ribosomal subunit protein bL20 from Campylobacter fetus subsp. fetus (strain 82-40).